The primary structure comprises 194 residues: Recombination protein RecR (194 aa).

The segment at 52–67 (CTECRTFTEEEVCHIC) adopts a C4-type zinc-finger fold. Residues 76–171 (GQICVVESPA…EASRIAHGVP (96 aa)) form the Toprim domain.

It belongs to the RecR family.

May play a role in DNA repair. It seems to be involved in an RecBC-independent recombinational process of DNA repair. It may act with RecF and RecO. This Vibrio campbellii (strain ATCC BAA-1116) protein is Recombination protein RecR.